A 310-amino-acid polypeptide reads, in one-letter code: MARTSESSPYVEFDRKQWRTLRKSTPLVLTEEELYGLRGLGEQIDLEEVAEVYLPLSRLIHLQVAARQRLFAATATFLGEKHPDQQVPFVIGVAGSVAVGKSTTARVLQALLARWEHHPRVDLVTTDGFLYPTAELNRRGIMHRKGFPESYDRRKLLRFVTEVKSGAEEVAAPVYSHISYDIIPGQYHLIRQPDILIIEGLNVLQTGPRLMVSDLFDFSIYVDARIEDIENWYIQRFLALRKTSFSDPDAHFHHYAGLSDRDATAAAQEIWHNINRPNLVENILPTRPRATLVLRKDANHSINRLRLRKL.

ATP is bound at residue 95 to 102 (GSVAVGKS).

It belongs to the prokaryotic pantothenate kinase family.

It is found in the cytoplasm. The enzyme catalyses (R)-pantothenate + ATP = (R)-4'-phosphopantothenate + ADP + H(+). It functions in the pathway cofactor biosynthesis; coenzyme A biosynthesis; CoA from (R)-pantothenate: step 1/5. The chain is Pantothenate kinase from Rhodococcus jostii (strain RHA1).